The following is a 228-amino-acid chain: LHFPL tetraspan subfamily member 2 protein (228 aa).

The next 4 helical transmembrane spans lie at 11 to 31 (MLWT…FMSA), 102 to 122 (IFLA…VFTM), 132 to 152 (IFNV…LGLI), and 181 to 201 (LGWA…CAVF).

This sequence belongs to the LHFP family. Expressed in all tissues and cell lines examined except brain and peripheral blood leukocytes.

It localises to the membrane. Its function is as follows. Plays a role in female and male fertility. Involved in distal reproductive tract development. The sequence is that of LHFPL tetraspan subfamily member 2 protein from Homo sapiens (Human).